The primary structure comprises 27 residues: Kunitz-type serine protease inhibitor 3 (27 aa).

One can recognise a BPTI/Kunitz inhibitor domain in the interval 1 to 27; that stretch reads EVHNFACLGKPDPGGCAHYIYRRYYYV.

The protein localises to the secreted. In terms of biological role, inhibits bovine trypsin and human neutrophil elastase. This chain is Kunitz-type serine protease inhibitor 3, found in Rhipicephalus microplus (Cattle tick).